The sequence spans 513 residues: V-type proton ATPase subunit B, kidney isoform (513 aa).

ATP is bound at residue R394. A PDZ-binding motif is present at residues 510 to 513; that stretch reads DTAL.

This sequence belongs to the ATPase alpha/beta chains family. In terms of assembly, V-ATPase is a heteromultimeric enzyme made up of two complexes: the ATP-hydrolytic V1 complex and the proton translocation V0 complex. The V1 complex consists of three catalytic AB heterodimers that form a heterohexamer, three peripheral stalks each consisting of EG heterodimers, one central rotor including subunits D and F, and the regulatory subunits C and H. The proton translocation complex V0 consists of the proton transport subunit a, a ring of proteolipid subunits c9c'', rotary subunit d, subunits e and f, and the accessory subunits ATP6AP1/Ac45 and ATP6AP2/PRR. Forms a complex with NHERF1 and SCL4A7. Kidney cortex and medulla.

It is found in the apical cell membrane. It localises to the basolateral cell membrane. In terms of biological role, non-catalytic subunit of the V1 complex of vacuolar(H+)-ATPase (V-ATPase), a multisubunit enzyme composed of a peripheral complex (V1) that hydrolyzes ATP and a membrane integral complex (V0) that translocates protons. V-ATPase is responsible for acidifying and maintaining the pH of intracellular compartments and in some cell types, is targeted to the plasma membrane, where it is responsible for acidifying the extracellular environment. Essential for the proper assembly and activity of V-ATPase. In renal intercalated cells, mediates secretion of protons (H+) into the urine thereby ensuring correct urinary acidification. Required for optimal olfactory function by mediating the acidification of the nasal olfactory epithelium. This chain is V-type proton ATPase subunit B, kidney isoform (ATP6V1B1), found in Bos taurus (Bovine).